The following is a 66-amino-acid chain: Large ribosomal subunit protein bL33c (66 aa).

Belongs to the bacterial ribosomal protein bL33 family.

The protein localises to the plastid. It localises to the chloroplast. In Carica papaya (Papaya), this protein is Large ribosomal subunit protein bL33c.